Here is a 189-residue protein sequence, read N- to C-terminus: Nucleoside triphosphate pyrophosphatase (189 aa).

The active-site Proton acceptor is the D70.

The protein belongs to the Maf family. The cofactor is a divalent metal cation.

The protein resides in the cytoplasm. It carries out the reaction a ribonucleoside 5'-triphosphate + H2O = a ribonucleoside 5'-phosphate + diphosphate + H(+). It catalyses the reaction a 2'-deoxyribonucleoside 5'-triphosphate + H2O = a 2'-deoxyribonucleoside 5'-phosphate + diphosphate + H(+). Nucleoside triphosphate pyrophosphatase. May have a dual role in cell division arrest and in preventing the incorporation of modified nucleotides into cellular nucleic acids. In Xylella fastidiosa (strain 9a5c), this protein is Nucleoside triphosphate pyrophosphatase.